The primary structure comprises 419 residues: tRNA(Ile)-lysidine synthase (419 aa).

31–36 (SGGGDS) contacts ATP.

Belongs to the tRNA(Ile)-lysidine synthase family.

The protein resides in the cytoplasm. The enzyme catalyses cytidine(34) in tRNA(Ile2) + L-lysine + ATP = lysidine(34) in tRNA(Ile2) + AMP + diphosphate + H(+). Its function is as follows. Ligates lysine onto the cytidine present at position 34 of the AUA codon-specific tRNA(Ile) that contains the anticodon CAU, in an ATP-dependent manner. Cytidine is converted to lysidine, thus changing the amino acid specificity of the tRNA from methionine to isoleucine. In Ruegeria pomeroyi (strain ATCC 700808 / DSM 15171 / DSS-3) (Silicibacter pomeroyi), this protein is tRNA(Ile)-lysidine synthase.